The sequence spans 824 residues: Tuftelin-interacting protein 11 (824 aa).

Residues 1-135 (MSMSHLYGKD…RTFAGGIKSN (135 aa)) are disordered. Residues 11–25 (EDSDGVEMENFEITD) are compositionally biased toward acidic residues. 2 stretches are compositionally biased toward basic and acidic residues: residues 41–61 (QTKE…DERP) and 85–114 (PAAE…EAKK). Positions 122-135 (KPSQRTFAGGIKSN) are enriched in polar residues. One can recognise a G-patch domain in the interval 145–191 (TKGIGQKLLQKMGYMPGRGLGKNAQGIIAPIEAKQRRGKGAVGAYGS).

This sequence belongs to the TFP11/STIP family. In terms of assembly, identified in the spliceosome C complex.

Its subcellular location is the nucleus. Its function is as follows. Involved in pre-mRNA splicing, specifically in spliceosome disassembly during late-stage splicing events. The polypeptide is Tuftelin-interacting protein 11 (tfip11) (Xenopus laevis (African clawed frog)).